We begin with the raw amino-acid sequence, 275 residues long: MHSRQQEIAVALHVCAPFTGPESVQTEIERRIRFIQSCLRESGMKTLVLGISGGVDSTTAGLLAQRAVEGMRAAGEGDHYRFIAVRLPYQVQHDEHEAQLAVDTIKPDECHTVNIGTAVLGLAAATEALEPLSPEQRDFVLGNTKARMRMVAQYTIANARQGLVIGTDHAAEAVMGFFTKFGDGACDLTPLAGLVKDQVRQIAAALGAPEQLVHKVPTADLEELSPGKPDEAAHGVSYRNIDDFLQGKPVPDEAAQIIVDTYDKTAHKRQLPKEP.

Glycine 50–serine 57 is an ATP binding site. Aspartate 56 lines the Mg(2+) pocket. Arginine 147 is a binding site for deamido-NAD(+). Residue threonine 167 coordinates ATP. Glutamate 172 is a Mg(2+) binding site. Positions 180 and 187 each coordinate deamido-NAD(+). Lysine 196 and threonine 218 together coordinate ATP. Histidine 267–lysine 268 is a binding site for deamido-NAD(+).

This sequence belongs to the NAD synthetase family. As to quaternary structure, homodimer.

The enzyme catalyses deamido-NAD(+) + NH4(+) + ATP = AMP + diphosphate + NAD(+) + H(+). The protein operates within cofactor biosynthesis; NAD(+) biosynthesis; NAD(+) from deamido-NAD(+) (ammonia route): step 1/1. Catalyzes the ATP-dependent amidation of deamido-NAD to form NAD. Uses ammonia as a nitrogen source. This is NH(3)-dependent NAD(+) synthetase from Stutzerimonas stutzeri (strain A1501) (Pseudomonas stutzeri).